Reading from the N-terminus, the 364-residue chain is Large ribosomal subunit protein uL22m (364 aa).

The protein belongs to the universal ribosomal protein uL22 family. As to quaternary structure, component of the mitochondrial large ribosomal subunit (mt-LSU). Mature N.crassa 74S mitochondrial ribosomes consist of a small (37S) and a large (54S) subunit. The 37S small subunit contains a 16S ribosomal RNA (16S mt-rRNA) and 32 different proteins. The 54S large subunit contains a 23S rRNA (23S mt-rRNA) and 42 different proteins. uL22m forms the wall of the exit tunnel.

It is found in the mitochondrion. Its function is as follows. Component of the mitochondrial ribosome (mitoribosome), a dedicated translation machinery responsible for the synthesis of mitochondrial genome-encoded proteins, including at least some of the essential transmembrane subunits of the mitochondrial respiratory chain. The mitoribosomes are attached to the mitochondrial inner membrane and translation products are cotranslationally integrated into the membrane. This chain is Large ribosomal subunit protein uL22m (mrpl22), found in Neurospora crassa (strain ATCC 24698 / 74-OR23-1A / CBS 708.71 / DSM 1257 / FGSC 987).